We begin with the raw amino-acid sequence, 128 residues long: Aspartate 1-decarboxylase (128 aa).

Ser-25 (schiff-base intermediate with substrate; via pyruvic acid) is an active-site residue. The residue at position 25 (Ser-25) is a Pyruvic acid (Ser). Thr-57 contributes to the substrate binding site. Tyr-58 functions as the Proton donor in the catalytic mechanism. 73 to 75 is a substrate binding site; sequence GSA.

This sequence belongs to the PanD family. Heterooctamer of four alpha and four beta subunits. Pyruvate is required as a cofactor. In terms of processing, is synthesized initially as an inactive proenzyme, which is activated by self-cleavage at a specific serine bond to produce a beta-subunit with a hydroxyl group at its C-terminus and an alpha-subunit with a pyruvoyl group at its N-terminus.

The protein localises to the cytoplasm. It catalyses the reaction L-aspartate + H(+) = beta-alanine + CO2. Its pathway is cofactor biosynthesis; (R)-pantothenate biosynthesis; beta-alanine from L-aspartate: step 1/1. Functionally, catalyzes the pyruvoyl-dependent decarboxylation of aspartate to produce beta-alanine. The sequence is that of Aspartate 1-decarboxylase from Paraburkholderia phytofirmans (strain DSM 17436 / LMG 22146 / PsJN) (Burkholderia phytofirmans).